Here is a 92-residue protein sequence, read N- to C-terminus: Non-specific lipid-transfer protein B (92 aa).

Cystine bridges form between C3-C51, C13-C28, C29-C74, and C49-C88.

Belongs to the plant LTP family.

In terms of biological role, plant non-specific lipid-transfer proteins transfer phospholipids as well as galactolipids across membranes. May play a role in wax or cutin deposition in the cell walls of expanding epidermal cells and certain secretory tissues. The chain is Non-specific lipid-transfer protein B from Ricinus communis (Castor bean).